Consider the following 198-residue polypeptide: Myb-related protein 340 (198 aa).

HTH myb-type domains follow at residues 10 to 62 (DVEV…LNYL) and 63 to 117 (RPDV…IQKH). 2 consecutive DNA-binding regions (H-T-H motif) follow at residues 38 to 62 (WNTI…LNYL) and 90 to 113 (WSKI…NRTR).

Expressed only in flowers.

It is found in the nucleus. Transcription factor. This Antirrhinum majus (Garden snapdragon) protein is Myb-related protein 340.